Consider the following 215-residue polypeptide: C-type lectin domain family 4 member D (215 aa).

Topologically, residues 1–17 are cytoplasmic; that stretch reads MGLEKPQSKLEGGMHPQ. The chain crosses the membrane as a helical; Signal-anchor for type II membrane protein span at residues 18–38; that stretch reads LIPSVIAVVFILLLSVCFIAS. The Extracellular portion of the chain corresponds to 39-215; it reads CLVTHHNFSR…ICKIPGTTLN (177 aa). N-linked (GlcNAc...) asparagine glycosylation is present at asparagine 45. Cysteine 84 and cysteine 95 form a disulfide bridge. The C-type lectin domain occupies 91-208; sequence FQSNCYFPLT…CNFEASRICK (118 aa). N-linked (GlcNAc...) asparagine glycosylation is found at asparagine 102 and asparagine 111. Intrachain disulfides connect cysteine 112–cysteine 207 and cysteine 182–cysteine 199. Residues glutamate 173, aspartate 175, asparagine 195, and aspartate 196 each contribute to the Ca(2+) site.

As to quaternary structure, heterodimer with CLEC4E; disulfide-linked. CLEC4E acts as a bridge for interaction between CLEC4D and FCER1G to form a functional complex. Heterodimer with CLEC6A; this heterodimer forms a pattern recognition receptor (PRR) against fungal infection. Expressed weakly in peripheral blood leukocytes, bone marrow and spleen. Expression is confined mostly in monocytes and macrophage and seems to be up-regulated by IL-6, IL-10, TNF-alpha and IFN-gamma.

It localises to the cell membrane. Functionally, calcium-dependent lectin that acts as a pattern recognition receptor (PRR) of the innate immune system: recognizes damage-associated molecular patterns (DAMPs) of pathogen-associated molecular patterns (PAMPs) of bacteria and fungi. The PAMPs include alpha-mannans on C.albicans hypheas and mycobacterial trehalose 6,6'-dimycolate (TDM). Interacts with signaling adapter Fc receptor gamma chain/FCER1G, likely via CLEC4E, to form a functional complex in myeloid cells. Binding of mycobacterial TDM or C.albicans alpha-mannans to this receptor complex leads to phosphorylation of the immunoreceptor tyrosine-based activation motif (ITAM) of FCER1G, triggering activation of SYK, CARD9 and NF-kappa-B, consequently driving maturation of antigen-presenting cells and shaping antigen-specific priming of T-cells toward effector T-helper 1 and T-helper 17 cell subtypes. The heterodimer formed with CLEC6A is active against fungal infection. Functions as an endocytic receptor. May be involved in antigen uptake at the site of infection, either for clearance of the antigen, or for processing and further presentation to T-cells. This Homo sapiens (Human) protein is C-type lectin domain family 4 member D.